A 347-amino-acid chain; its full sequence is Selenide, water dikinase (347 aa).

Selenocysteine 17 is a catalytic residue. Selenocysteine 17 is a non-standard amino acid (selenocysteine). ATP contacts are provided by residues lysine 20 and threonine 48–aspartate 50. Aspartate 51 is a binding site for Mg(2+). Residues aspartate 68, aspartate 91, and glycine 139–serine 141 contribute to the ATP site. Aspartate 91 is a binding site for Mg(2+). Residue aspartate 227 coordinates Mg(2+).

It belongs to the selenophosphate synthase 1 family. Class I subfamily. Homodimer. It depends on Mg(2+) as a cofactor.

The catalysed reaction is hydrogenselenide + ATP + H2O = selenophosphate + AMP + phosphate + 2 H(+). Synthesizes selenophosphate from selenide and ATP. The protein is Selenide, water dikinase of Haemophilus influenzae (strain 86-028NP).